The primary structure comprises 163 residues: Secreted RxLR effector protein 135 (163 aa).

Positions Met1–Gly20 are cleaved as a signal peptide. Positions Arg33–Arg45 match the RxLR-dEER motif. The disordered stretch occupies residues Lys94 to Gly127.

It belongs to the RxLR effector family.

Its subcellular location is the secreted. It is found in the host nucleus. It localises to the host cytoplasm. Its function is as follows. Secreted effector that completely suppresses the host cell death induced by cell death-inducing proteins. The chain is Secreted RxLR effector protein 135 from Plasmopara viticola (Downy mildew of grapevine).